The following is a 115-amino-acid chain: MTDPLLKCTTRHIRIFTAITQNNNLIEDSDHLTMDLDPDNEFLWENQAIEKVQNRFSELVESQVGQELSDYVLRKIGSDLESYIRQMLQAGEVSYNPDSRVLNYSMGLPRTPELL.

The protein belongs to the complex I NdhM subunit family. NDH-1 can be composed of about 15 different subunits; different subcomplexes with different compositions have been identified which probably have different functions.

The protein localises to the cellular thylakoid membrane. The catalysed reaction is a plastoquinone + NADH + (n+1) H(+)(in) = a plastoquinol + NAD(+) + n H(+)(out). It carries out the reaction a plastoquinone + NADPH + (n+1) H(+)(in) = a plastoquinol + NADP(+) + n H(+)(out). Functionally, NDH-1 shuttles electrons from an unknown electron donor, via FMN and iron-sulfur (Fe-S) centers, to quinones in the respiratory and/or the photosynthetic chain. The immediate electron acceptor for the enzyme in this species is believed to be plastoquinone. Couples the redox reaction to proton translocation, and thus conserves the redox energy in a proton gradient. Cyanobacterial NDH-1 also plays a role in inorganic carbon-concentration. The polypeptide is NAD(P)H-quinone oxidoreductase subunit M (Prochlorococcus marinus (strain SARG / CCMP1375 / SS120)).